A 228-amino-acid chain; its full sequence is Ran-binding protein 1 homolog a (228 aa).

A compositionally biased stretch (basic and acidic residues) spans 1–13 (MATNEPEHEHRDE). Disordered regions lie at residues 1-30 (MATN…QVAP) and 159-228 (SEEE…GPST). Over residues 14–24 (EEAGANEDEDT) the composition is skewed to acidic residues. Positions 27–162 (QVAPIVRLEE…FKEVAESEEE (136 aa)) constitute a RanBD1 domain. Residues 179–228 (LTVEETKTEEKTEAKAVETAKTEVKAEEKKESEAEKSGEAKKTEESGPST) are compositionally biased toward basic and acidic residues.

As to quaternary structure, interacts with the GTP-bound form of RAN1, RAN2 and RAN3. Ubiquitous. Preferentially expressed in root tips and gynoecium.

Its subcellular location is the nucleus. It localises to the nuclear pore complex. The protein is Ran-binding protein 1 homolog a (RANBP1A) of Arabidopsis thaliana (Mouse-ear cress).